The sequence spans 124 residues: Ribosome-binding factor A (124 aa).

The protein belongs to the RbfA family. As to quaternary structure, monomer. Binds 30S ribosomal subunits, but not 50S ribosomal subunits or 70S ribosomes.

It localises to the cytoplasm. Functionally, one of several proteins that assist in the late maturation steps of the functional core of the 30S ribosomal subunit. Associates with free 30S ribosomal subunits (but not with 30S subunits that are part of 70S ribosomes or polysomes). Required for efficient processing of 16S rRNA. May interact with the 5'-terminal helix region of 16S rRNA. This Sorangium cellulosum (strain So ce56) (Polyangium cellulosum (strain So ce56)) protein is Ribosome-binding factor A.